The following is a 467-amino-acid chain: 6-phosphogluconate dehydrogenase, decarboxylating (467 aa).

NADP(+) is bound by residues 9–14, 32–34, 73–75, and Asn101; these read GLGVMG, NYT, and VTA. Residues Asn101 and 127-129 each bind substrate; that span reads SGG. Lys181 (proton acceptor) is an active-site residue. Residue 184–185 participates in substrate binding; that stretch reads HN. The Proton donor role is filled by Glu188. Substrate is bound by residues Tyr189, Lys259, Arg286, and His451.

It belongs to the 6-phosphogluconate dehydrogenase family. Homodimer.

It carries out the reaction 6-phospho-D-gluconate + NADP(+) = D-ribulose 5-phosphate + CO2 + NADPH. The protein operates within carbohydrate degradation; pentose phosphate pathway; D-ribulose 5-phosphate from D-glucose 6-phosphate (oxidative stage): step 3/3. Its function is as follows. Catalyzes the oxidative decarboxylation of 6-phosphogluconate to ribulose 5-phosphate and CO(2), with concomitant reduction of NADP to NADPH. This chain is 6-phosphogluconate dehydrogenase, decarboxylating (gntZ), found in Bacillus licheniformis.